The primary structure comprises 146 residues: Ribonuclease H (146 aa).

One can recognise an RNase H type-1 domain in the interval 4–145; that stretch reads ELNKVVVYTD…ADMLARSQIV (142 aa). Mg(2+) is bound by residues Asp13, Glu51, Asp73, and Asp137.

This sequence belongs to the RNase H family. As to quaternary structure, monomer. It depends on Mg(2+) as a cofactor.

It localises to the cytoplasm. It catalyses the reaction Endonucleolytic cleavage to 5'-phosphomonoester.. Functionally, endonuclease that specifically degrades the RNA of RNA-DNA hybrids. The sequence is that of Ribonuclease H from Ehrlichia ruminantium (strain Gardel).